The following is a 222-amino-acid chain: Cyclin-dependent kinase inhibitor 3 (222 aa).

Residues Lys-68–Val-101 form a disordered region. The segment covering Gly-85–Val-95 has biased composition (basic and acidic residues).

The protein belongs to the CDI family. ICK/KRP subfamily. Specifically interacts with CDKA-1, but not with CDKB1-1.

It localises to the nucleus. The protein resides in the nucleoplasm. In terms of biological role, binds and inhibits CYCD2-1/CDKA-1 complex kinase activity. May target specifically CDKA-1. The polypeptide is Cyclin-dependent kinase inhibitor 3 (KRP3) (Arabidopsis thaliana (Mouse-ear cress)).